Here is a 1012-residue protein sequence, read N- to C-terminus: DNA polymerase gamma (1012 aa).

The protein belongs to the DNA polymerase type-A family. The cofactor is Mg(2+).

Its subcellular location is the mitochondrion. It carries out the reaction DNA(n) + a 2'-deoxyribonucleoside 5'-triphosphate = DNA(n+1) + diphosphate. In terms of biological role, involved in the replication of mitochondrial DNA. This chain is DNA polymerase gamma (MIP1), found in Komagataella pastoris (Yeast).